Reading from the N-terminus, the 35-residue chain is Endochitinase 2 (35 aa).

Belongs to the glycosyl hydrolase 19 family. Chitinase class I subfamily.

The catalysed reaction is Random endo-hydrolysis of N-acetyl-beta-D-glucosaminide (1-&gt;4)-beta-linkages in chitin and chitodextrins.. Its function is as follows. Defense against chitin-containing fungal pathogens. The sequence is that of Endochitinase 2 from Capsicum chinense (Scotch bonnet).